We begin with the raw amino-acid sequence, 712 residues long: Ribosomal RNA large subunit methyltransferase K/L (712 aa).

The THUMP domain maps to 46–157 (GAYQALLHSR…RENMVVSLDL (112 aa)).

The protein belongs to the methyltransferase superfamily. RlmKL family.

It is found in the cytoplasm. The enzyme catalyses guanosine(2445) in 23S rRNA + S-adenosyl-L-methionine = N(2)-methylguanosine(2445) in 23S rRNA + S-adenosyl-L-homocysteine + H(+). It carries out the reaction guanosine(2069) in 23S rRNA + S-adenosyl-L-methionine = N(2)-methylguanosine(2069) in 23S rRNA + S-adenosyl-L-homocysteine + H(+). Functionally, specifically methylates the guanine in position 2445 (m2G2445) and the guanine in position 2069 (m7G2069) of 23S rRNA. The protein is Ribosomal RNA large subunit methyltransferase K/L of Actinobacillus pleuropneumoniae serotype 7 (strain AP76).